A 99-amino-acid polypeptide reads, in one-letter code: ATP-dependent Clp protease adapter protein ClpS (99 aa).

This sequence belongs to the ClpS family. In terms of assembly, binds to the N-terminal domain of the chaperone ClpA.

In terms of biological role, involved in the modulation of the specificity of the ClpAP-mediated ATP-dependent protein degradation. The polypeptide is ATP-dependent Clp protease adapter protein ClpS (Acetivibrio thermocellus (strain ATCC 27405 / DSM 1237 / JCM 9322 / NBRC 103400 / NCIMB 10682 / NRRL B-4536 / VPI 7372) (Clostridium thermocellum)).